The primary structure comprises 436 residues: Phosphomethylpyrimidine synthase (436 aa).

Residues asparagine 69, methionine 98, tyrosine 127, histidine 163, 185-187 (SRG), 226-229 (DACR), and glutamate 265 each bind substrate. Histidine 269 is a binding site for Zn(2+). Tyrosine 292 is a substrate binding site. Histidine 333 contributes to the Zn(2+) binding site. [4Fe-4S] cluster contacts are provided by cysteine 409, cysteine 412, and cysteine 416.

The protein belongs to the ThiC family. Requires [4Fe-4S] cluster as cofactor.

The catalysed reaction is 5-amino-1-(5-phospho-beta-D-ribosyl)imidazole + S-adenosyl-L-methionine = 4-amino-2-methyl-5-(phosphooxymethyl)pyrimidine + CO + 5'-deoxyadenosine + formate + L-methionine + 3 H(+). It functions in the pathway cofactor biosynthesis; thiamine diphosphate biosynthesis. Functionally, catalyzes the synthesis of the hydroxymethylpyrimidine phosphate (HMP-P) moiety of thiamine from aminoimidazole ribotide (AIR) in a radical S-adenosyl-L-methionine (SAM)-dependent reaction. This Clostridium perfringens (strain SM101 / Type A) protein is Phosphomethylpyrimidine synthase.